A 198-amino-acid chain; its full sequence is Holliday junction branch migration complex subunit RuvA (198 aa).

Positions 1-63 (MYDYIKGQLT…EDAHLLFGFH (63 aa)) are domain I. The domain II stretch occupies residues 64–142 (TEDEKDVFLK…EAPQETGHTK (79 aa)). The interval 143–147 (ARSNK) is flexible linker. Residues 148-198 (AGNTQLDEAIEALLALGYKAKELKKIRAFFEGTSETAEQYIKSALKLLMKG) form a domain III region.

The protein belongs to the RuvA family. Homotetramer. Forms an RuvA(8)-RuvB(12)-Holliday junction (HJ) complex. HJ DNA is sandwiched between 2 RuvA tetramers; dsDNA enters through RuvA and exits via RuvB. An RuvB hexamer assembles on each DNA strand where it exits the tetramer. Each RuvB hexamer is contacted by two RuvA subunits (via domain III) on 2 adjacent RuvB subunits; this complex drives branch migration. In the full resolvosome a probable DNA-RuvA(4)-RuvB(12)-RuvC(2) complex forms which resolves the HJ.

The protein localises to the cytoplasm. Functionally, the RuvA-RuvB-RuvC complex processes Holliday junction (HJ) DNA during genetic recombination and DNA repair, while the RuvA-RuvB complex plays an important role in the rescue of blocked DNA replication forks via replication fork reversal (RFR). RuvA specifically binds to HJ cruciform DNA, conferring on it an open structure. The RuvB hexamer acts as an ATP-dependent pump, pulling dsDNA into and through the RuvAB complex. HJ branch migration allows RuvC to scan DNA until it finds its consensus sequence, where it cleaves and resolves the cruciform DNA. The polypeptide is Holliday junction branch migration complex subunit RuvA (Streptococcus pyogenes serotype M1).